The sequence spans 202 residues: Cytochrome c oxidase assembly protein CtaG (202 aa).

The Cytoplasmic segment spans residues 1-14 (MTSPANPSEVTRDR). The chain crosses the membrane as a helical; Signal-anchor for type II membrane protein span at residues 15 to 37 (RNRGVAFVCAGVFVAMVGMSFAA). Topologically, residues 38–202 (VPLYRLFCQV…GAAKTQKLGG (165 aa)) are periplasmic.

Belongs to the COX11/CtaG family.

It localises to the cell inner membrane. Functionally, exerts its effect at some terminal stage of cytochrome c oxidase synthesis, probably by being involved in the insertion of the copper B into subunit I. This chain is Cytochrome c oxidase assembly protein CtaG, found in Chelativorans sp. (strain BNC1).